A 242-amino-acid chain; its full sequence is Tropomyosin-1 (242 aa).

2 disordered regions span residues 1 to 31 (MDAI…ELTA) and 65 to 96 (TSLT…QTDY). The stretch at 1 to 242 (MDAIKKKMSA…DELLLELASM (242 aa)) forms a coiled coil. Composition is skewed to basic and acidic residues over residues 13 to 23 (TKLEEADKQAQ) and 70 to 96 (KYNE…QTDY).

This sequence belongs to the tropomyosin family. As to quaternary structure, homodimer. Expressed ubiquitously.

The sequence is that of Tropomyosin-1 (TPM1) from Podocoryna carnea (Hydrozoan).